We begin with the raw amino-acid sequence, 731 residues long: DNA gyrase subunit B, chloroplastic/mitochondrial (731 aa).

A Toprim domain is found at 512–619 (AEIFIVEGDS…RYQRALFEEG (108 aa)). Residues E518, D592, and D594 each contribute to the Mg(2+) site.

It belongs to the type II topoisomerase GyrB family. Made up of two chains. The A chain is responsible for DNA breakage and rejoining; the B chain catalyzes ATP hydrolysis. It depends on Mg(2+) as a cofactor. Requires Mn(2+) as cofactor. Ca(2+) is required as a cofactor. Ubiquitous.

Its subcellular location is the plastid. The protein localises to the chloroplast. It is found in the mitochondrion. The enzyme catalyses ATP-dependent breakage, passage and rejoining of double-stranded DNA.. Functionally, seems to play a critical role in chloroplast nucleoid partitioning by regulating DNA topology. A type II topoisomerase that negatively supercoils closed circular double-stranded DNA in an ATP-dependent manner. The chain is DNA gyrase subunit B, chloroplastic/mitochondrial (GYRB) from Nicotiana benthamiana.